The sequence spans 385 residues: Succinate--CoA ligase [ADP-forming] subunit beta (385 aa).

Residues 9–244 (KEILRKYGVP…QDEEDPLETR (236 aa)) form the ATP-grasp domain. Residues K46, 53–55 (GRG), E99, C102, and E107 contribute to the ATP site. Mg(2+)-binding residues include N199 and D213. Substrate is bound by residues N264 and 321 to 323 (GIM).

It belongs to the succinate/malate CoA ligase beta subunit family. Heterotetramer of two alpha and two beta subunits. The cofactor is Mg(2+).

It carries out the reaction succinate + ATP + CoA = succinyl-CoA + ADP + phosphate. The catalysed reaction is GTP + succinate + CoA = succinyl-CoA + GDP + phosphate. It participates in carbohydrate metabolism; tricarboxylic acid cycle; succinate from succinyl-CoA (ligase route): step 1/1. Its function is as follows. Succinyl-CoA synthetase functions in the citric acid cycle (TCA), coupling the hydrolysis of succinyl-CoA to the synthesis of either ATP or GTP and thus represents the only step of substrate-level phosphorylation in the TCA. The beta subunit provides nucleotide specificity of the enzyme and binds the substrate succinate, while the binding sites for coenzyme A and phosphate are found in the alpha subunit. The protein is Succinate--CoA ligase [ADP-forming] subunit beta of Rickettsia bellii (strain RML369-C).